A 458-amino-acid polypeptide reads, in one-letter code: NADH-quinone oxidoreductase subunit N (458 aa).

The next 14 membrane-spanning stretches (helical) occupy residues 2-22 (LLLLPEITLTLIALLGQFFAV), 30-50 (IISNIIILLCILSIFLTFKYS), 62-82 (GINIGISKSIVLLFTIISMII), 94-114 (LKFEFITLMLLSVVGIFVAIS), 118-138 (FLLLFCGMELTALTSYALAGF), 153-173 (FILGSLVSCLSLFGISFIYGF), 194-214 (LGLIIGIILFLSSIFFKLSSV), 235-255 (FNAASKIGMVIVLLNISKLII), 261-281 (INYNLIKIIAILSMLFGAFGA), 290-310 (LMAYSTILNIGYVLIGVLLHN), 318-338 (LLYMLIYAVGSIGFFTCLIIL), 361-381 (IAAVISIVMFSMIGIPPLTGF), 397-417 (FALAYCGIFTSVVAAFYYLKV), and 438-458 (LLLINYLVVGFLLLGSFIISF).

This sequence belongs to the complex I subunit 2 family. In terms of assembly, NDH-1 is composed of 14 different subunits. Subunits NuoA, H, J, K, L, M, N constitute the membrane sector of the complex.

The protein localises to the cell inner membrane. The catalysed reaction is a quinone + NADH + 5 H(+)(in) = a quinol + NAD(+) + 4 H(+)(out). Its function is as follows. NDH-1 shuttles electrons from NADH, via FMN and iron-sulfur (Fe-S) centers, to quinones in the respiratory chain. The immediate electron acceptor for the enzyme in this species is believed to be ubiquinone. Couples the redox reaction to proton translocation (for every two electrons transferred, four hydrogen ions are translocated across the cytoplasmic membrane), and thus conserves the redox energy in a proton gradient. This is NADH-quinone oxidoreductase subunit N from Rickettsia conorii (strain ATCC VR-613 / Malish 7).